A 231-amino-acid chain; its full sequence is Elongation factor 1-delta 1 (231 aa).

Ala-2 is modified (N-acetylalanine). Residues 10 to 73 (DAGLKKLDEH…LRISGVSAEG (64 aa)) enclose the GST C-terminal domain. Disordered stretches follow at residues 85–108 (TEEAVATPPAADSKDAAADEEDDD) and 116–135 (ETEEEKKAAEERAASVKAST). Positions 119-129 (EEKKAAEERAA) are enriched in basic and acidic residues.

It belongs to the EF-1-beta/EF-1-delta family. EF-1 is composed of 4 subunits: alpha, beta (1B-alpha=beta'), delta (1B-beta), and gamma (1B-gamma).

Functionally, EF-1-beta and EF-1-delta stimulate the exchange of GDP bound to EF-1-alpha to GTP. This chain is Elongation factor 1-delta 1, found in Arabidopsis thaliana (Mouse-ear cress).